Here is a 388-residue protein sequence, read N- to C-terminus: Arginine biosynthesis bifunctional protein ArgJ 2 (388 aa).

Residues Thr145, Lys167, Thr178, Glu257, and Asn381 each contribute to the substrate site. The active-site Nucleophile is the Thr178.

Belongs to the ArgJ family. As to quaternary structure, heterotetramer of two alpha and two beta chains.

Its subcellular location is the cytoplasm. The catalysed reaction is N(2)-acetyl-L-ornithine + L-glutamate = N-acetyl-L-glutamate + L-ornithine. It catalyses the reaction L-glutamate + acetyl-CoA = N-acetyl-L-glutamate + CoA + H(+). The protein operates within amino-acid biosynthesis; L-arginine biosynthesis; L-ornithine and N-acetyl-L-glutamate from L-glutamate and N(2)-acetyl-L-ornithine (cyclic): step 1/1. It functions in the pathway amino-acid biosynthesis; L-arginine biosynthesis; N(2)-acetyl-L-ornithine from L-glutamate: step 1/4. Functionally, catalyzes two activities which are involved in the cyclic version of arginine biosynthesis: the synthesis of N-acetylglutamate from glutamate and acetyl-CoA as the acetyl donor, and of ornithine by transacetylation between N(2)-acetylornithine and glutamate. This Clostridium acetobutylicum (strain ATCC 824 / DSM 792 / JCM 1419 / IAM 19013 / LMG 5710 / NBRC 13948 / NRRL B-527 / VKM B-1787 / 2291 / W) protein is Arginine biosynthesis bifunctional protein ArgJ 2.